A 717-amino-acid polypeptide reads, in one-letter code: Ribosomal RNA large subunit methyltransferase K/L (717 aa).

The 112-residue stretch at aspartate 44–leucine 155 folds into the THUMP domain.

The protein belongs to the methyltransferase superfamily. RlmKL family.

It is found in the cytoplasm. It catalyses the reaction guanosine(2445) in 23S rRNA + S-adenosyl-L-methionine = N(2)-methylguanosine(2445) in 23S rRNA + S-adenosyl-L-homocysteine + H(+). The catalysed reaction is guanosine(2069) in 23S rRNA + S-adenosyl-L-methionine = N(2)-methylguanosine(2069) in 23S rRNA + S-adenosyl-L-homocysteine + H(+). In terms of biological role, specifically methylates the guanine in position 2445 (m2G2445) and the guanine in position 2069 (m7G2069) of 23S rRNA. The sequence is that of Ribosomal RNA large subunit methyltransferase K/L from Francisella tularensis subsp. tularensis (strain SCHU S4 / Schu 4).